A 244-amino-acid chain; its full sequence is Carboxy-S-adenosyl-L-methionine synthase (244 aa).

S-adenosyl-L-methionine is bound by residues Tyr40, 65–67 (GCS), 90–91 (DN), 119–120 (DI), Asn134, and Arg201.

It belongs to the class I-like SAM-binding methyltransferase superfamily. Cx-SAM synthase family. In terms of assembly, homodimer.

The catalysed reaction is prephenate + S-adenosyl-L-methionine = carboxy-S-adenosyl-L-methionine + 3-phenylpyruvate + H2O. Its function is as follows. Catalyzes the conversion of S-adenosyl-L-methionine (SAM) to carboxy-S-adenosyl-L-methionine (Cx-SAM). This Geobacter sp. (strain M21) protein is Carboxy-S-adenosyl-L-methionine synthase.